The primary structure comprises 176 residues: Flavodoxin 1 (176 aa).

Residues 4–165 (TGIFFGSDTG…RVEKWVKQIS (162 aa)) form the Flavodoxin-like domain.

This sequence belongs to the flavodoxin family. The cofactor is FMN.

Low-potential electron donor to a number of redox enzymes (Potential). Involved in the reactivation of inactive cob(II)alamin in methionine synthase. This chain is Flavodoxin 1 (fldA), found in Escherichia coli O157:H7.